The following is a 320-amino-acid chain: MKYLKHLSDAADREAIKALHDERQTWVNQEKKGFLRYREPYLQLARFKADSINLENDVVTIGHGEQISHEEQAEIRQALRAYMPWRKGPFAVFGVDIDAEWRSERKWQRLEKHLPDLKGKVIADIGCNNGYYMFRMAAQEPAFVLGIEPSVQHYYCFKALEEMSGLTNLEIDLLGVEHLPLFTESFDVVFLMGIIYHRSAPIETLRAVLDSLKPGGTLILETQGIPGEQPYALFPDKTYAKVPGTYFVPSASCLINWMHKAGFIDVDLFCDHPMSPEEQRQTEWMEFESYKDFLDPENPELTLEGYPAPHRFFVKATKKM.

Residues Lys87, Trp101, Lys106, Gly126, 148–150, 176–177, Met192, Tyr196, and Arg311 contribute to the carboxy-S-adenosyl-L-methionine site; these read EPS and VE.

The protein belongs to the class I-like SAM-binding methyltransferase superfamily. CmoB family. Homotetramer.

The enzyme catalyses carboxy-S-adenosyl-L-methionine + 5-hydroxyuridine(34) in tRNA = 5-carboxymethoxyuridine(34) in tRNA + S-adenosyl-L-homocysteine + H(+). Catalyzes carboxymethyl transfer from carboxy-S-adenosyl-L-methionine (Cx-SAM) to 5-hydroxyuridine (ho5U) to form 5-carboxymethoxyuridine (cmo5U) at position 34 in tRNAs. This Desulfotalea psychrophila (strain LSv54 / DSM 12343) protein is tRNA U34 carboxymethyltransferase.